Consider the following 474-residue polypeptide: Gasdermin-C (474 aa).

Residues 1–237 form a triggers pyroptosis region; it reads MLYTFDQVSK…TCAILLSANA (237 aa).

Belongs to the gasdermin family. In terms of assembly, homooligomer; homooligomeric ring-shaped pore complex containing 27-28 subunits when inserted in the membrane. In terms of processing, cleavage by CASP8 relieves autoinhibition by releasing the N-terminal moiety (Gasdermin-C, N-terminal) that initiates pyroptosis. Palmitoylated.

It is found in the cytoplasm. It localises to the cytosol. The protein localises to the cell membrane. The full-length protein before cleavage is inactive: intramolecular interactions between N- and C-terminal domains mediate autoinhibition in the absence of activation signal. The intrinsic pyroptosis-inducing activity is carried by the released N-terminal moiety (Gasdermin-C, N-terminal) following cleavage by caspase CASP8. This form constitutes the precursor of the pore-forming protein: upon cleavage, the released N-terminal moiety (Gasdermin-C, N-terminal) binds to membranes and forms pores, triggering pyroptosis. Its function is as follows. Pore-forming protein that causes membrane permeabilization and pyroptosis. Produced by the cleavage of gasdermin-C by caspase CASP8 in response to death signals. After cleavage, moves to the plasma membrane where it strongly binds to membrane inner leaflet lipids. Homooligomerizes within the membrane and forms pores of 10-15 nanometers (nm) of inner diameter, triggering pyroptosis. The sequence is that of Gasdermin-C from Rattus norvegicus (Rat).